The chain runs to 339 residues: Dihydroorotase (339 aa).

Positions 12 and 14 each coordinate Zn(2+). Residues 14–16 and Asn-40 contribute to the substrate site; that span reads HVR. The Zn(2+) site is built by Lys-94, His-133, His-167, and Asp-239. Residue Lys-94 is modified to N6-carboxylysine. His-133 contributes to the substrate binding site. Asp-239 is a catalytic residue. Residues His-243 and Ala-255 each coordinate substrate.

The protein belongs to the metallo-dependent hydrolases superfamily. DHOase family. Class II DHOase subfamily. Homodimer. Zn(2+) is required as a cofactor.

It catalyses the reaction (S)-dihydroorotate + H2O = N-carbamoyl-L-aspartate + H(+). It functions in the pathway pyrimidine metabolism; UMP biosynthesis via de novo pathway; (S)-dihydroorotate from bicarbonate: step 3/3. Its function is as follows. Catalyzes the reversible cyclization of carbamoyl aspartate to dihydroorotate. The protein is Dihydroorotase of Helicobacter pylori (strain G27).